A 393-amino-acid chain; its full sequence is Anhydro-N-acetylmuramic acid kinase (393 aa).

9-16 (GTSADGVD) is an ATP binding site.

This sequence belongs to the anhydro-N-acetylmuramic acid kinase family.

It catalyses the reaction 1,6-anhydro-N-acetyl-beta-muramate + ATP + H2O = N-acetyl-D-muramate 6-phosphate + ADP + H(+). Its pathway is amino-sugar metabolism; 1,6-anhydro-N-acetylmuramate degradation. It participates in cell wall biogenesis; peptidoglycan recycling. Functionally, catalyzes the specific phosphorylation of 1,6-anhydro-N-acetylmuramic acid (anhMurNAc) with the simultaneous cleavage of the 1,6-anhydro ring, generating MurNAc-6-P. Is required for the utilization of anhMurNAc either imported from the medium or derived from its own cell wall murein, and thus plays a role in cell wall recycling. This Acidithiobacillus ferrooxidans (strain ATCC 23270 / DSM 14882 / CIP 104768 / NCIMB 8455) (Ferrobacillus ferrooxidans (strain ATCC 23270)) protein is Anhydro-N-acetylmuramic acid kinase.